The chain runs to 764 residues: Serine/threonine-protein kinase MPS1 (764 aa).

Disordered regions lie at residues 66 to 95 (EEMDRSSSRSHPPPSMGNLTSGHTSTSSHS), 197 to 216 (ELPLEDSHQTNFKETKRNTD), and 258 to 316 (QAAL…KSSI). Residues 85-95 (TSGHTSTSSHS) show a composition bias toward low complexity. The span at 201–216 (EDSHQTNFKETKRNTD) shows a compositional bias: basic and acidic residues. 2 stretches are compositionally biased toward low complexity: residues 272–292 (KSRSSSSSLSSNNLLANKDNS) and 306–315 (STGSSSSKSS). The Protein kinase domain occupies 440 to 720 (YEKIELLGRG…LSSTFLQPFM (281 aa)). Residues 446–454 (LGRGGSSRV) and Lys468 each bind ATP. Asp563 (proton acceptor) is an active-site residue.

The protein belongs to the protein kinase superfamily. Ser/Thr protein kinase family. Post-translationally, autophosphorylated.

It catalyses the reaction L-seryl-[protein] + ATP = O-phospho-L-seryl-[protein] + ADP + H(+). The catalysed reaction is L-threonyl-[protein] + ATP = O-phospho-L-threonyl-[protein] + ADP + H(+). It carries out the reaction L-tyrosyl-[protein] + ATP = O-phospho-L-tyrosyl-[protein] + ADP + H(+). Its function is as follows. Involved in mitotic spindle assembly checkpoint signaling, a process that delays anaphase until chromosomes are bioriented on the spindle, and in the repair of incorrect mitotic kinetochore-spindle microtubule attachments. Phosphorylates SPC105 on MELT motifs; phosphorylation is required for recruitment of the BUB1-BUB3 complex to kinetochores. Phosphorylates CNN1, which contributes to the enrichment of CNN1 on anaphase kinetochores. Implicated in spindle pole body (SPD) duplication. Phosphorylates the SPC29 and SPC110 spindle pole body components. In Saccharomyces cerevisiae (strain ATCC 204508 / S288c) (Baker's yeast), this protein is Serine/threonine-protein kinase MPS1 (MPS1).